The following is a 350-amino-acid chain: Tetraacyldisaccharide 4'-kinase (350 aa).

ATP is bound at residue 48 to 55; the sequence is SAGGTGKT.

The protein belongs to the LpxK family.

It catalyses the reaction a lipid A disaccharide + ATP = a lipid IVA + ADP + H(+). The protein operates within glycolipid biosynthesis; lipid IV(A) biosynthesis; lipid IV(A) from (3R)-3-hydroxytetradecanoyl-[acyl-carrier-protein] and UDP-N-acetyl-alpha-D-glucosamine: step 6/6. Its function is as follows. Transfers the gamma-phosphate of ATP to the 4'-position of a tetraacyldisaccharide 1-phosphate intermediate (termed DS-1-P) to form tetraacyldisaccharide 1,4'-bis-phosphate (lipid IVA). The sequence is that of Tetraacyldisaccharide 4'-kinase from Chlorobium limicola (strain DSM 245 / NBRC 103803 / 6330).